The sequence spans 241 residues: Protein McbE (241 aa).

The next 6 membrane-spanning stretches (helical) occupy residues 17–35 (TPFS…FFFL), 54–72 (ISWF…NYCL), 105–123 (LIMS…LTGF), 131–149 (IVMI…MVSL), 163–181 (STIY…IVSL), and 212–230 (LMTI…ISAL).

The protein localises to the cell membrane. Its function is as follows. Together with two further proteins McbF and McbG this protein causes immunity to the peptide antibiotic microcin B17 (MccB17), which inhibits DNA replication in enterobacteriaceae. Immunity is determined by two different mechanisms. McbE is involved in the production of extracellular MccB17 and, in a complex with McbF it also serves as 'pump' for the export of active MccB17 from the cytoplasm to the periplasmic space. The polypeptide is Protein McbE (mcbE) (Escherichia coli).